The sequence spans 528 residues: MASMRESDTGLWLHNKLGATDELWAPPSIASLLTAAVIDNIRLCFHGLSSAVKLKLLLGTLHLPRRTVDEMKGALMEIIQLASLDSDPWVLMVADILKSFPDTGSLNLELEEQNPNVQDILGELREKVGECEASAMLPLECQYLNKNALTTLAGPLTPPVKHFQLKRKPKSATLRAELLQKSTETAQQLKRSAGVPFHAKGRGLLRKMDTTTPLKGIPKQAPFRSPTAPSVFSPTGNRTPIPPSRTLLRKERGVKLLDISELDMVGAGREAKRRRKTLDAEVVEKPAKEETVVENATPDYAAGLVSTQKLGSLNNEPALPSTSYLPSTPSVVPASSYIPSSETPPAPSSREASRPPEEPSAPSPTLPAQFKQRAPMYNSGLSPATPTPAAPTSPLTPTTPPAVAPTTQTPPVAMVAPQTQAPAQQQPKKNLSLTREQMFAAQEMFKTANKVTRPEKALILGFMAGSRENPCQEQGDVIQIKLSEHTEDLPKADGQGSTTMLVDTVFEMNYATGQWTRFKKYKPMTNVS.

An HDAg domain is found at tryptophan 89–leucine 248. The tract at residues arginine 125–glutamine 188 is NELF-C/D-binding. Threonine 157 carries the phosphothreonine modification. The RNAPII-binding stretch occupies residues leucine 189–leucine 248. The segment at lysine 215 to arginine 245 is disordered. Phosphoserine occurs at positions 225 and 233. Positions threonine 227–arginine 238 are enriched in polar residues. A Phosphothreonine modification is found at threonine 277. A compositionally biased stretch (low complexity) spans proline 320–serine 341. The interval proline 320 to threonine 409 is disordered. Position 363 is a phosphoserine (serine 363).

Belongs to the NELF-A family. The NELF complex is composed of NELFA, NELFB, NELFCD (isoform NELF-C or isoform NELF-D) and NELFE; NELFA and NELFCD form a stable subcomplex that binds to the N-terminus of NELFB. In vitro, the NELFA:NELFCD subcomplex binds to ssDNA and ssRNA in a sequence- and structure-dependent manner. Interacts with the RNA polymerase II complex when it is not phosphorylated by P-TEFb. Ubiquitous. Expressed in heart, brain, placenta, liver, skeletal muscle, kidney and pancreas. Expressed at lower level in adult lung. Expressed in fetal brain, lung, liver and kidney.

The protein localises to the nucleus. Its function is as follows. Essential component of the NELF complex, a complex that negatively regulates the elongation of transcription by RNA polymerase II. The NELF complex, which acts via an association with the DSIF complex and causes transcriptional pausing, is counteracted by the P-TEFb kinase complex. Functionally, (Microbial infection) The NELF complex is involved in HIV-1 latency possibly involving recruitment of PCF11 to paused RNA polymerase II. The polypeptide is Negative elongation factor A (NELFA) (Homo sapiens (Human)).